We begin with the raw amino-acid sequence, 251 residues long: Imidazole glycerol phosphate synthase subunit HisF (251 aa).

Active-site residues include Asp-11 and Asp-130.

Belongs to the HisA/HisF family. In terms of assembly, heterodimer of HisH and HisF.

The protein localises to the cytoplasm. The enzyme catalyses 5-[(5-phospho-1-deoxy-D-ribulos-1-ylimino)methylamino]-1-(5-phospho-beta-D-ribosyl)imidazole-4-carboxamide + L-glutamine = D-erythro-1-(imidazol-4-yl)glycerol 3-phosphate + 5-amino-1-(5-phospho-beta-D-ribosyl)imidazole-4-carboxamide + L-glutamate + H(+). It functions in the pathway amino-acid biosynthesis; L-histidine biosynthesis; L-histidine from 5-phospho-alpha-D-ribose 1-diphosphate: step 5/9. Its function is as follows. IGPS catalyzes the conversion of PRFAR and glutamine to IGP, AICAR and glutamate. The HisF subunit catalyzes the cyclization activity that produces IGP and AICAR from PRFAR using the ammonia provided by the HisH subunit. The chain is Imidazole glycerol phosphate synthase subunit HisF from Thiobacillus denitrificans (strain ATCC 25259 / T1).